We begin with the raw amino-acid sequence, 130 residues long: Small ribosomal subunit protein uS9 (130 aa).

It belongs to the universal ribosomal protein uS9 family.

The chain is Small ribosomal subunit protein uS9 from Methylibium petroleiphilum (strain ATCC BAA-1232 / LMG 22953 / PM1).